A 240-amino-acid polypeptide reads, in one-letter code: Proteasome subunit alpha (240 aa).

This sequence belongs to the peptidase T1A family. As to quaternary structure, the 20S proteasome core is composed of 14 alpha and 14 beta subunits that assemble into four stacked heptameric rings, resulting in a barrel-shaped structure. The two inner rings, each composed of seven catalytic beta subunits, are sandwiched by two outer rings, each composed of seven alpha subunits. The catalytic chamber with the active sites is on the inside of the barrel. Has a gated structure, the ends of the cylinder being occluded by the N-termini of the alpha-subunits. Is capped by the proteasome-associated ATPase, ARC.

The protein resides in the cytoplasm. Its pathway is protein degradation; proteasomal Pup-dependent pathway. Its activity is regulated as follows. The formation of the proteasomal ATPase ARC-20S proteasome complex, likely via the docking of the C-termini of ARC into the intersubunit pockets in the alpha-rings, may trigger opening of the gate for substrate entry. Interconversion between the open-gate and close-gate conformations leads to a dynamic regulation of the 20S proteasome proteolysis activity. In terms of biological role, component of the proteasome core, a large protease complex with broad specificity involved in protein degradation. This Frankia casuarinae (strain DSM 45818 / CECT 9043 / HFP020203 / CcI3) protein is Proteasome subunit alpha.